We begin with the raw amino-acid sequence, 151 residues long: Large ribosomal subunit protein bL9 (151 aa).

The protein belongs to the bacterial ribosomal protein bL9 family.

In terms of biological role, binds to the 23S rRNA. The polypeptide is Large ribosomal subunit protein bL9 (Lactobacillus helveticus (strain DPC 4571)).